Reading from the N-terminus, the 29-residue chain is Dermaseptin-S5 (29 aa).

This sequence belongs to the frog skin active peptide (FSAP) family. Dermaseptin subfamily. As to expression, expressed by the skin glands.

The protein resides in the secreted. Potent antimicrobial peptide with activity against bacteria and protozoa. Also has activity against fungi. Probably acts by disturbing membrane functions with its amphipathic structure. This chain is Dermaseptin-S5, found in Phyllomedusa sauvagei (Sauvage's leaf frog).